The sequence spans 435 residues: Dual specificity protein kinase FUZ7 (435 aa).

The segment at M1–P61 is disordered. The segment covering A46 to V59 has biased composition (polar residues). The region spanning L109–V417 is the Protein kinase domain. ATP-binding positions include L115–V123 and K138. Catalysis depends on D231, which acts as the Proton acceptor. Residues N307–G359 form a disordered region.

It belongs to the protein kinase superfamily. STE Ser/Thr protein kinase family. MAP kinase kinase subfamily.

The catalysed reaction is L-seryl-[protein] + ATP = O-phospho-L-seryl-[protein] + ADP + H(+). It carries out the reaction L-threonyl-[protein] + ATP = O-phospho-L-threonyl-[protein] + ADP + H(+). It catalyses the reaction L-tyrosyl-[protein] + ATP = O-phospho-L-tyrosyl-[protein] + ADP + H(+). Its function is as follows. Protein kinase that is necessary for a-locus-dependent processes, such as conjugation tube formation, filament formation, and maintenance of filamentous growth, and for a-locus-independent processes, such as tumor induction and teliospore germination. This Mycosarcoma maydis (Corn smut fungus) protein is Dual specificity protein kinase FUZ7 (FUZ7).